Consider the following 121-residue polypeptide: Parathyroid hormone 4 (121 aa).

A signal peptide spans Met1–Cys24. The propeptide occupies Gln25–Ser29. The tract at residues Arg77–Lys97 is disordered.

It belongs to the parathyroid hormone family. Specifically expressed in a bilateral cluster of neurons in the dorsal region of the periventricular hypothalamus. Their axons project through the midbrain and hindbrain and down the spinal cord.

The protein localises to the secreted. Neuroendocrine peptide which is produced by a subset of neurons in the hypothalamus. Activates the G-protein coupled receptors pth1ra, pth1rb and pth2r with similar affinity. Receptor binding stimulates intracellular cAMP production. Plays a role in bone mineralization by regulating expression of factors involved in phosphate homeostasis. Important for embryonic bone development. This chain is Parathyroid hormone 4, found in Danio rerio (Zebrafish).